Here is a 299-residue protein sequence, read N- to C-terminus: Protoheme IX farnesyltransferase (299 aa).

Helical transmembrane passes span 27–47, 53–73, 97–117, 121–141, 149–169, 175–195, 222–242, 244–264, and 273–293; these read VVAL…HEHF, LIAL…NHLI, FNVL…LMLW, LTAY…TLYL, IVIA…SITG, AWLL…ALAI, ILLY…VGMA, YLYL…AIKL, and AIEM…ALLL.

The protein belongs to the UbiA prenyltransferase family. Protoheme IX farnesyltransferase subfamily.

The protein localises to the cell inner membrane. It catalyses the reaction heme b + (2E,6E)-farnesyl diphosphate + H2O = Fe(II)-heme o + diphosphate. Its pathway is porphyrin-containing compound metabolism; heme O biosynthesis; heme O from protoheme: step 1/1. Converts heme B (protoheme IX) to heme O by substitution of the vinyl group on carbon 2 of heme B porphyrin ring with a hydroxyethyl farnesyl side group. The chain is Protoheme IX farnesyltransferase from Vibrio vulnificus (strain YJ016).